The primary structure comprises 198 residues: Na(+)-translocating NADH-quinone reductase subunit E (198 aa).

The next 6 helical transmembrane spans lie at 11–31, 35–55, 77–97, 110–130, 140–160, and 176–196; these read AVFIENMALSFFLGMCTFLAV, VSPAFGLGIAVTFVLGIAVPV, FLNFITFIGVIAGLVQILEMV, GIFLPLIAVNCAIFGGVSFMV, IVYGFGSGLGWMLAIVALAGL, and LGITFISVGLMALGFMSFSGI.

This sequence belongs to the NqrDE/RnfAE family. As to quaternary structure, composed of six subunits; NqrA, NqrB, NqrC, NqrD, NqrE and NqrF.

The protein localises to the cell inner membrane. It carries out the reaction a ubiquinone + n Na(+)(in) + NADH + H(+) = a ubiquinol + n Na(+)(out) + NAD(+). Functionally, NQR complex catalyzes the reduction of ubiquinone-1 to ubiquinol by two successive reactions, coupled with the transport of Na(+) ions from the cytoplasm to the periplasm. NqrA to NqrE are probably involved in the second step, the conversion of ubisemiquinone to ubiquinol. The sequence is that of Na(+)-translocating NADH-quinone reductase subunit E from Haemophilus influenzae (strain ATCC 51907 / DSM 11121 / KW20 / Rd).